The sequence spans 630 residues: Pro-interleukin-16 (630 aa).

2 disordered regions span residues 30 to 268 (ENPG…FPLT) and 316 to 343 (PKEG…ASDT). Residues 129–143 (IRASSSSSIKQRISS) are compositionally biased toward low complexity. A Phosphoserine modification is found at Ser-220. Polar residues predominate over residues 321–343 (SPTSSSNEDSAANGSAETSASDT). An interaction with PPP1R12A, PPP1R12B and PPP1R12C region spans residues 404 to 500 (KQLDSIHVTI…IVTRKLTAES (97 aa)). PDZ domains follow at residues 410–495 (HVTI…VTRK) and 532–617 (TVTL…IRRK).

In terms of assembly, homotetramer. Pro-interleukin-16 interacts (via PDZ 2 domain) with PPP1R12A, PPP1R12B and PPP1R12C. Pro-interleukin-16 interacts with GRIN2A. Pro-interleukin-16 interacts with GABPB1. Pro-interleukin-16 interacts (via PDZ 3 domain) with HDAC3.

Its subcellular location is the secreted. The protein localises to the cytoplasm. It is found in the nucleus. In terms of biological role, interleukin-16 stimulates a migratory response in CD4+ lymphocytes, monocytes, and eosinophils. Primes CD4+ T-cells for IL-2 and IL-15 responsiveness. Also induces T-lymphocyte expression of interleukin 2 receptor. Ligand for CD4. Functionally, pro-interleukin-16 is involved in cell cycle progression in T-cells. Appears to be involved in transcriptional regulation of SKP2 and is probably part of a transcriptional repression complex on the core promoter of the SKP2 gene. May act as a scaffold for GABPB1 (the DNA-binding subunit the GABP transcription factor complex) and HDAC3 thus maintaining transcriptional repression and blocking cell cycle progression in resting T-cells. The polypeptide is Pro-interleukin-16 (IL16) (Macaca fascicularis (Crab-eating macaque)).